A 740-amino-acid polypeptide reads, in one-letter code: Arf-GAP with coiled-coil, ANK repeat and PH domain-containing protein 1 (740 aa).

In terms of domain architecture, BAR spans 1-226 (MTVKLDFEEC…RKELGAQLHQ (226 aa)). Residues 1 to 382 (MTVKLDFEEC…RGPGQGSGHL (382 aa)) are required for formation of endosomal tubules when overexpressed with PIP5K1C. In terms of domain architecture, PH spans 265–360 (GLVMEGHLFK…WVSAVQSSIA (96 aa)). An Arf-GAP domain is found at 405 to 527 (GHVVAQVQSV…KFLTKLPEIR (123 aa)). The interval 405 to 740 (GHVVAQVQSV…SRRSHDLHTL (336 aa)) is required for interaction with GULP1. The C4-type zinc finger occupies 420-443 (CCDCREPAPEWASINLGVTLCIQC). Y485 bears the 3'-nitrotyrosine mark. The tract at residues 525-566 (EIRGRRGGRGRPRGQPPVPPKPSIRPRPGSLRSKPEPPSEDL) is prevents interaction with ITGB1 when S-554 is not phosphorylated. Residues 525-581 (EIRGRRGGRGRPRGQPPVPPKPSIRPRPGSLRSKPEPPSEDLGSLHPGALLFRASGH) form a disordered region. Pro residues predominate over residues 538-549 (GQPPVPPKPSIR). S554 carries the phosphoserine; by PKB modification. 3 ANK repeats span residues 606-635 (DNAT…NVNQ), 639-668 (AGRG…DLGA), and 672-702 (EGRD…EAEA).

Banana-shaped homodimer laterally assembling into tetramers, the tetramers further pack helically onto the membrane. Interacts with GTP-bound ARF6. Interacts with third cytoplasmic loop of SLC2A4/GLUT4. Interacts with CLTC. Interacts with GULP1. Forms a complex with GDP-bound ARF6 and GULP1. Interacts with ITGB1; required for ITGB1 recycling. Post-translationally, phosphorylation at Ser-554 by PKB is required for interaction with ITGB1, export of ITGB1 from recycling endosomes to the cell surface and ITGB1-dependent cell migration. In terms of tissue distribution, highest level in lung and spleen. Low level in heart, kidney, liver and pancreas.

The protein resides in the recycling endosome membrane. With respect to regulation, GAP activity stimulated by phosphatidylinositol 4,5-bisphosphate (PIP2) and phosphatidic acid. Its function is as follows. GTPase-activating protein (GAP) for ADP ribosylation factor 6 (ARF6) required for clathrin-dependent export of proteins from recycling endosomes to trans-Golgi network and cell surface. Required for regulated export of ITGB1 from recycling endosomes to the cell surface and ITGB1-dependent cell migration. The sequence is that of Arf-GAP with coiled-coil, ANK repeat and PH domain-containing protein 1 (ACAP1) from Homo sapiens (Human).